The primary structure comprises 150 residues: Troponin C, isotype gamma (150 aa).

M1 is subject to N-acetylmethionine. 4 consecutive EF-hand domains span residues 7 to 42, 43 to 78, 83 to 118, and 119 to 150; these read EQLS…MGVK, ISEK…FLIE, ALKA…LDNR, and LTED…MMSG. Residues D56, D58, S60, E62, and E67 each contribute to the Ca(2+) site. Positions 132, 134, 136, 138, and 143 each coordinate Ca(2+).

Belongs to the troponin C family.

In terms of biological role, troponin is the central regulatory protein of striated muscle contraction. Tn consists of three components: Tn-I which is the inhibitor of actomyosin ATPase, Tn-T which contains the binding site for tropomyosin and Tn-C. The binding of calcium to Tn-C abolishes the inhibitory action of Tn on actin filaments. The protein is Troponin C, isotype gamma of Astacus leptodactylus (Turkish narrow-clawed crayfish).